We begin with the raw amino-acid sequence, 895 residues long: Collagen alpha-1(I) chain (895 aa).

The disordered stretch occupies residues 1–895; it reads GPMGPSGPRG…PGPIGPPGPR (895 aa). Positions 20-39 are enriched in low complexity; sequence PQGFQGPPGEPGEPGASGPM. The span at 51–65 shows a compositional bias: basic and acidic residues; it reads NGDDGEAGKPGRPGE. The residue at position 90 (Ser90) is a Phosphoserine. Low complexity-rich tracts occupy residues 98-114 and 137-150; these read DAGP…PGEN and PAGA…TGAA. Pro residues predominate over residues 152–164; sequence PPGPTGPAGPPGF. 6 stretches are compositionally biased toward low complexity: residues 198-237, 302-336, 348-374, 383-399, 553-564, and 575-593; these read AGAA…RGPS, ERGF…PGEA, KGIT…QDGR, ARGQ…KGAA, TGPSGPAGPTGA, and AGFA…KGDA. Ser556 carries the post-translational modification Phosphoserine. The segment covering 595–607 has biased composition (pro residues); it reads PPGPAGPAGPPGP. Composition is skewed to low complexity over residues 608–635, 660–669, and 679–703; these read IGSV…AGRV, ETGPAGRPGE, and AGEK…QGIA. Residues 741–751 show a composition bias toward pro residues; that stretch reads PPGPVGPPGIA. A compositionally biased stretch (low complexity) spans 753-768; sequence PPGESGREGSPGAEGS. The segment covering 787 to 802 has biased composition (pro residues); sequence AGPPGAPGAPGAPGPV. Composition is skewed to low complexity over residues 823–838 and 853–886; these read IGPV…QGPR and PGEQ…NGIP.

The protein belongs to the fibrillar collagen family. As to quaternary structure, trimers of one alpha 2(I) and two alpha 1(I) chains. Prolines at the third position of the tripeptide repeating unit (G-X-Y) are hydroxylated in some or all of the chains. As to expression, forms the fibrils of tendon, ligaments and bones. In bones, the fibrils are mineralized with calcium hydroxyapatite.

It localises to the secreted. The protein resides in the extracellular space. The protein localises to the extracellular matrix. Its function is as follows. Type I collagen is a member of group I collagen (fibrillar forming collagen). The protein is Collagen alpha-1(I) chain of Equus sp.